Consider the following 271-residue polypeptide: 5-deoxy-glucuronate isomerase (271 aa).

It belongs to the isomerase IolB family.

The catalysed reaction is 5-deoxy-D-glucuronate = 5-dehydro-2-deoxy-D-gluconate. It functions in the pathway polyol metabolism; myo-inositol degradation into acetyl-CoA; acetyl-CoA from myo-inositol: step 4/7. Involved in the isomerization of 5-deoxy-glucuronate (5DG) to 5-dehydro-2-deoxy-D-gluconate (DKG or 2-deoxy-5-keto-D-gluconate). This is 5-deoxy-glucuronate isomerase from Bacillus licheniformis (strain ATCC 14580 / DSM 13 / JCM 2505 / CCUG 7422 / NBRC 12200 / NCIMB 9375 / NCTC 10341 / NRRL NRS-1264 / Gibson 46).